Reading from the N-terminus, the 511-residue chain is Maturase K (511 aa).

The protein belongs to the intron maturase 2 family. MatK subfamily.

The protein resides in the plastid. It is found in the chloroplast. Its function is as follows. Usually encoded in the trnK tRNA gene intron. Probably assists in splicing its own and other chloroplast group II introns. The sequence is that of Maturase K from Mandragora officinarum (Mandrake).